Here is a 311-residue protein sequence, read N- to C-terminus: Probable hydrogen peroxide-inducible genes activator (311 aa).

Residues 8 to 65 (PTIAGLRAFVAVVEKGHFSAAASFLGVRQSTLSQALAALESGLGVQLIERSTRRVFVT) enclose the HTH lysR-type domain. The segment at residues 25–44 (FSAAASFLGVRQSTLSQALA) is a DNA-binding region (H-T-H motif).

Belongs to the LysR transcriptional regulatory family.

Functionally, required for the induction the katG gene for catalase. Involved in the response to hydrogen peroxide. This is Probable hydrogen peroxide-inducible genes activator (oxyR) from Mycobacterium leprae (strain TN).